Here is a 191-residue protein sequence, read N- to C-terminus: Elongation factor P (191 aa).

It belongs to the elongation factor P family.

It localises to the cytoplasm. Its pathway is protein biosynthesis; polypeptide chain elongation. In terms of biological role, involved in peptide bond synthesis. Stimulates efficient translation and peptide-bond synthesis on native or reconstituted 70S ribosomes in vitro. Probably functions indirectly by altering the affinity of the ribosome for aminoacyl-tRNA, thus increasing their reactivity as acceptors for peptidyl transferase. This Ralstonia pickettii (strain 12J) protein is Elongation factor P.